Here is a 438-residue protein sequence, read N- to C-terminus: Acyl-CoA dehydrogenase apdG (438 aa).

It belongs to the acyl-CoA dehydrogenase family. FAD serves as cofactor.

Its pathway is secondary metabolite biosynthesis. Its function is as follows. Acyl-CoA dehydrogenase; part of the gene cluster that mediates the biosynthesis of aspyridones. The polyketide-amino acid backbone preaspyridone A is first assembled by the PKS-NRPS hybrid apdA. The assembly of preaspyridone A is initiated by loading of malonyl-CoA onto apdA, followed by decarboxylation to yield the acetyl starter unit. The growing polyketide chain then elongates into a tetraketide. The adpA PKS module catalyzes three Claisen condensations, as well as beta-keto processing and methylation. Alpha-methylation step during polyketide synthesis is a prerequisite and a key checkpoint for chain transfer between PKS and NRPS modules. The downstream NRPS module contains the condensation (C), adenylation (A), and thiolation (T) domains and catalyzes the incorporation of tyrosine via the formation of the L-tyrosinyl-thioester and the amide linkage between L-tyrosinyl-thioester and the tetraketide. The bimodular assembly line is terminated with a reductase (R) domain that facilitates formation and release of the tetramic acid product. Because apdA lacks a designated enoylreductase (ER) domain, the required activity is provided the enoyl reductase apdC. ApdC appears to operate with different stereoselectivity in different PKS cycle. Combined with apdC, apdA is proposed to synthesize preaspyridone A via about 20 enzymatic steps. A number of oxidative steps performed successively by the cytochrome P450 monooxygenases apdE and apdB are required for the conversion of preaspyridone A to aspyridone A. The cytochrome P450 monooxygenase apdE is responsible for the oxidative dephenylation of preaspyridone A. Finally, the predicted FAD-dependent monooxygenase apdD and the acyl-CoA dehydrogenase apdG may be involved in the transformation of aspyridone A into aspyridone B. This Emericella nidulans (strain FGSC A4 / ATCC 38163 / CBS 112.46 / NRRL 194 / M139) (Aspergillus nidulans) protein is Acyl-CoA dehydrogenase apdG.